The following is a 116-amino-acid chain: Large ribosomal subunit protein uL22c (116 aa).

This sequence belongs to the universal ribosomal protein uL22 family. In terms of assembly, part of the 50S ribosomal subunit.

It localises to the plastid. The protein resides in the chloroplast. This protein binds specifically to 23S rRNA. Its function is as follows. The globular domain of the protein is located near the polypeptide exit tunnel on the outside of the subunit, while an extended beta-hairpin is found that lines the wall of the exit tunnel in the center of the 70S ribosome. This Porphyra purpurea (Red seaweed) protein is Large ribosomal subunit protein uL22c (rpl22).